The primary structure comprises 306 residues: OVARIAN TUMOR DOMAIN-containing deubiquitinating enzyme 1 (306 aa).

In terms of domain architecture, OTU spans 81-295 (IGIRRTRGDG…PGHYDILYPK (215 aa)). Residue Asp89 is part of the active site. Cys92 serves as the catalytic Nucleophile. Residues His259 and His288 contribute to the active site.

This sequence belongs to the peptidase C65 family.

It catalyses the reaction Thiol-dependent hydrolysis of ester, thioester, amide, peptide and isopeptide bonds formed by the C-terminal Gly of ubiquitin (a 76-residue protein attached to proteins as an intracellular targeting signal).. Its activity is regulated as follows. Cleavage activities for 'Lys-48'- and 'Lys-63'-linked ubiquitin (UB) tetramers is inhibited by UB aldehyde and N-ethylmaleimide but not by the metalloprotease inhibitors 1,10-phenanthroline and EDTA, and the serine protease inhibitor phenylmethylsulfonyl fluoride. In terms of biological role, hydrolase that can remove conjugated ubiquitin from proteins in vitro and may therefore play an important regulatory role at the level of protein turnover by preventing degradation. Cysteine protease with a preference for Met-1 and 'Lys-48' over 'Lys-63'-linked ubiquitin (UB) tetramers (e.g. Ub2, Ub3 and Ub4) as substrates. The sequence is that of OVARIAN TUMOR DOMAIN-containing deubiquitinating enzyme 1 from Arabidopsis thaliana (Mouse-ear cress).